Here is a 232-residue protein sequence, read N- to C-terminus: MWSQSFLGSAPKLCLFSSSLPPFSHHKIHKFFCFAQNPSSTVSINLSKRHLNLSILTLFFNGFLLDNKAKSMEELQRYTDSNNGFTLLIPSSYTKVEKAGANALFEELNNGSNNIGVVVSPVRIKSLDQFGSPQFVADKLINAEKRKESTKEAEVVSVGERAGLGQQVYEFEYKIDSTRGGIKRVFSAAFVSSNKLYLLNVVHSDKPENPLDSSTRMSLEQVLHSFDALPLT.

Residues 1-34 (MWSQSFLGSAPKLCLFSSSLPPFSHHKIHKFFCF) constitute a chloroplast transit peptide. Residues 35–71 (AQNPSSTVSINLSKRHLNLSILTLFFNGFLLDNKAKS) constitute a thylakoid transit peptide.

Belongs to the PsbP family.

It localises to the plastid. Its subcellular location is the chloroplast thylakoid lumen. This chain is PsbP domain-containing protein 2, chloroplastic (PPD2), found in Arabidopsis thaliana (Mouse-ear cress).